A 604-amino-acid chain; its full sequence is Aspartate--tRNA(Asp/Asn) ligase (604 aa).

Glu-168 contributes to the L-aspartate binding site. The tract at residues 192–195 (QLFK) is aspartate. Arg-214 contributes to the L-aspartate binding site. ATP is bound by residues 214 to 216 (RDE) and Gln-223. His-446 serves as a coordination point for L-aspartate. Glu-480 provides a ligand contact to ATP. Position 487 (Arg-487) interacts with L-aspartate. An ATP-binding site is contributed by 532–535 (GWDR). The interval 575 to 604 (LEAGVDARPKPEARAQAGTAGPAAPVADPT) is disordered. Positions 577–587 (AGVDARPKPEA) are enriched in basic and acidic residues. Over residues 588–604 (RAQAGTAGPAAPVADPT) the composition is skewed to low complexity.

The protein belongs to the class-II aminoacyl-tRNA synthetase family. Type 1 subfamily. Homodimer.

The protein resides in the cytoplasm. It carries out the reaction tRNA(Asx) + L-aspartate + ATP = L-aspartyl-tRNA(Asx) + AMP + diphosphate. Functionally, aspartyl-tRNA synthetase with relaxed tRNA specificity since it is able to aspartylate not only its cognate tRNA(Asp) but also tRNA(Asn). Reaction proceeds in two steps: L-aspartate is first activated by ATP to form Asp-AMP and then transferred to the acceptor end of tRNA(Asp/Asn). In Salinispora arenicola (strain CNS-205), this protein is Aspartate--tRNA(Asp/Asn) ligase.